Here is a 604-residue protein sequence, read N- to C-terminus: Transcriptional repressor rco-1 (604 aa).

2 disordered regions span residues 87 to 110 and 124 to 264; these read RGGA…PAIG and GGQA…DRLP. The segment covering 144-163 has biased composition (pro residues); it reads MPAPPGLQGPPPPPPPPSQQ. Low complexity-rich tracts occupy residues 164-177 and 190-209; these read PPFQ…QGPG and PGPA…PATP. The segment covering 210–229 has biased composition (polar residues); sequence QINTPIPYNGGPAQSPQVPT. WD repeat units lie at residues 295-324, 342-372, 384-414, 425-455, 469-499, 523-553, and 565-600; these read QHES…QIYD, TGDL…RVWD, GHEQ…RLWD, SIED…RVWD, GHKD…KMWE, GHRD…QFWD, and GHKN…RIWS.

In terms of biological role, represses transcription by RNA polymerase II. May be involved at several stages of conidiation and other growth and development processes. Appears to regulate genes that are expressed in asexual and sexual spore pathways. The sequence is that of Transcriptional repressor rco-1 (rco-1) from Neurospora crassa (strain ATCC 24698 / 74-OR23-1A / CBS 708.71 / DSM 1257 / FGSC 987).